A 460-amino-acid polypeptide reads, in one-letter code: GTPase Der (460 aa).

2 EngA-type G domains span residues 3 to 167 (FTFA…PEPD) and 189 to 364 (IRVA…AVWN). GTP is bound by residues 9-16 (GRPNVGKS), 56-60 (DTAGL), 119-122 (NKSE), 195-202 (GRPNAGKS), 242-246 (DTAGL), and 307-310 (NKWD). Positions 365–449 (TRVPTAALNR…PVRIMLREKA (85 aa)) constitute a KH-like domain.

Belongs to the TRAFAC class TrmE-Era-EngA-EngB-Septin-like GTPase superfamily. EngA (Der) GTPase family. As to quaternary structure, associates with the 50S ribosomal subunit.

GTPase that plays an essential role in the late steps of ribosome biogenesis. In Rhodopseudomonas palustris (strain BisB5), this protein is GTPase Der.